The primary structure comprises 187 residues: Elongation factor P (187 aa).

Belongs to the elongation factor P family.

Its subcellular location is the cytoplasm. Its pathway is protein biosynthesis; polypeptide chain elongation. Functionally, involved in peptide bond synthesis. Stimulates efficient translation and peptide-bond synthesis on native or reconstituted 70S ribosomes in vitro. Probably functions indirectly by altering the affinity of the ribosome for aminoacyl-tRNA, thus increasing their reactivity as acceptors for peptidyl transferase. The sequence is that of Elongation factor P from Kocuria rhizophila (strain ATCC 9341 / DSM 348 / NBRC 103217 / DC2201).